Consider the following 244-residue polypeptide: Coenzyme Q-binding protein COQ10 homolog B, mitochondrial (244 aa).

This sequence belongs to the COQ10 family. As to quaternary structure, interacts with coenzyme Q.

The protein localises to the mitochondrion inner membrane. In terms of biological role, required for the function of coenzyme Q in the respiratory chain. May serve as a chaperone or may be involved in the transport of Q6 from its site of synthesis to the catalytic sites of the respiratory complexes. The chain is Coenzyme Q-binding protein COQ10 homolog B, mitochondrial (coq10b) from Xenopus laevis (African clawed frog).